The chain runs to 198 residues: FMN-dependent NADH:quinone oxidoreductase (198 aa).

FMN-binding positions include Ser-10, 16–18, 94–97, and 138–141; these read SQS, MYNF, and TRGG.

The protein belongs to the azoreductase type 1 family. Homodimer. FMN serves as cofactor.

The enzyme catalyses 2 a quinone + NADH + H(+) = 2 a 1,4-benzosemiquinone + NAD(+). It catalyses the reaction N,N-dimethyl-1,4-phenylenediamine + anthranilate + 2 NAD(+) = 2-(4-dimethylaminophenyl)diazenylbenzoate + 2 NADH + 2 H(+). Quinone reductase that provides resistance to thiol-specific stress caused by electrophilic quinones. Its function is as follows. Also exhibits azoreductase activity. Catalyzes the reductive cleavage of the azo bond in aromatic azo compounds to the corresponding amines. The polypeptide is FMN-dependent NADH:quinone oxidoreductase (Shewanella putrefaciens (strain CN-32 / ATCC BAA-453)).